The following is a 158-amino-acid chain: 2-amino-4-hydroxy-6-hydroxymethyldihydropteridine pyrophosphokinase (158 aa).

This sequence belongs to the HPPK family.

It carries out the reaction 6-hydroxymethyl-7,8-dihydropterin + ATP = (7,8-dihydropterin-6-yl)methyl diphosphate + AMP + H(+). It participates in cofactor biosynthesis; tetrahydrofolate biosynthesis; 2-amino-4-hydroxy-6-hydroxymethyl-7,8-dihydropteridine diphosphate from 7,8-dihydroneopterin triphosphate: step 4/4. Its function is as follows. Catalyzes the transfer of pyrophosphate from adenosine triphosphate (ATP) to 6-hydroxymethyl-7,8-dihydropterin, an enzymatic step in folate biosynthesis pathway. In Methylorubrum extorquens (strain ATCC 14718 / DSM 1338 / JCM 2805 / NCIMB 9133 / AM1) (Methylobacterium extorquens), this protein is 2-amino-4-hydroxy-6-hydroxymethyldihydropteridine pyrophosphokinase (folK).